The following is a 518-amino-acid chain: MAPKISISLNPPYNGEFYSSNDQMSGIVSLQLTKALSIRKISVILKGFSETLTKIDQEYMFQQNGMMMPGQDNKSFHTLMKFEQRVFPPDNVWNALDGSSKPFKVKPGSYNYSFQFDKFPRKPECLKNHTAKTVAFVTRSNARLPPTFNSHWQEFNKIDNLDLYFYSFGKVIYMVQVQLELGKSSSWFKPFHKLIREIETFEFIPEPKDLIIEPDEDDNEELNAFSNNSRGNSMVTNNEFFNSSNLKVPSKDVKVVNGVGYIKSDRNFSQANSILIENGDIRSRPVSSVTSTRQSTRLVNGMKVFPSTYKMGLPDGESNMRIEVRSRDLKQIYRKDYLFRSGSQNFDKVYVVMEGNIASLSKMQITPLKLQLNLLETTTYLSQGIANGNYSSLKLIEIDLNQLKSNKPLLDLNEIRENFDGSMFECELRLKDHPILRKLVFNEEDYRHRGNRLYSFKTCTIKRTFSLQLLIEWGINGIRKQSEVNIDPVQIFCQVREHVEAEALPRYVPPPTYTEMAS.

K118 participates in a covalent cross-link: Glycyl lysine isopeptide (Lys-Gly) (interchain with G-Cter in ubiquitin).

This sequence belongs to the ART10 family. As to quaternary structure, interacts with RSP5. Ubiquitinated by RSP5.

It is found in the cytoplasm. Its function is as follows. May regulate endocytosis by recruiting RSP5 ubiquitin ligase activity to specific plasma membrane proteins in response to extracellular stimuli. The sequence is that of Arrestin-related trafficking adapter 10 (ART10) from Saccharomyces cerevisiae (strain ATCC 204508 / S288c) (Baker's yeast).